Here is a 430-residue protein sequence, read N- to C-terminus: Dihydroorotase (430 aa).

Positions 61 and 63 each coordinate Zn(2+). Substrate contacts are provided by residues 63–65 (HLR) and Asn95. Asp153, His180, and His233 together coordinate Zn(2+). Asn279 is a binding site for substrate. Asp306 is a binding site for Zn(2+). Asp306 is an active-site residue. Residue His310 participates in substrate binding.

This sequence belongs to the metallo-dependent hydrolases superfamily. DHOase family. Class I DHOase subfamily. Zn(2+) is required as a cofactor.

The catalysed reaction is (S)-dihydroorotate + H2O = N-carbamoyl-L-aspartate + H(+). It functions in the pathway pyrimidine metabolism; UMP biosynthesis via de novo pathway; (S)-dihydroorotate from bicarbonate: step 3/3. In terms of biological role, catalyzes the reversible cyclization of carbamoyl aspartate to dihydroorotate. The sequence is that of Dihydroorotase from Caldicellulosiruptor saccharolyticus (strain ATCC 43494 / DSM 8903 / Tp8T 6331).